Reading from the N-terminus, the 268-residue chain is tRNA (guanine-N(1)-)-methyltransferase (268 aa).

Residues Gly110 and 129–134 each bind S-adenosyl-L-methionine; that span reads IGDFVM. Positions 246–268 are disordered; that stretch reads WGAPPAPVKRHRKRRPETTESAS.

It belongs to the RNA methyltransferase TrmD family. Homodimer.

The protein localises to the cytoplasm. It catalyses the reaction guanosine(37) in tRNA + S-adenosyl-L-methionine = N(1)-methylguanosine(37) in tRNA + S-adenosyl-L-homocysteine + H(+). Its function is as follows. Specifically methylates guanosine-37 in various tRNAs. This chain is tRNA (guanine-N(1)-)-methyltransferase, found in Deinococcus deserti (strain DSM 17065 / CIP 109153 / LMG 22923 / VCD115).